The chain runs to 261 residues: Phosphatidylglycerol--prolipoprotein diacylglyceryl transferase (261 aa).

4 consecutive transmembrane segments (helical) span residues 17-37, 59-79, 94-114, and 121-141; these read FAIH…LLLG, LLFA…TLFY, IWEG…ALLW, and TSFF…LAFG. Residue Arg142 coordinates a 1,2-diacyl-sn-glycero-3-phospho-(1'-sn-glycerol). 2 consecutive transmembrane segments (helical) span residues 174–194 and 228–248; these read PSQI…LWIY and FLGL…PMII.

It belongs to the Lgt family.

It is found in the cell inner membrane. The enzyme catalyses L-cysteinyl-[prolipoprotein] + a 1,2-diacyl-sn-glycero-3-phospho-(1'-sn-glycerol) = an S-1,2-diacyl-sn-glyceryl-L-cysteinyl-[prolipoprotein] + sn-glycerol 1-phosphate + H(+). Its pathway is protein modification; lipoprotein biosynthesis (diacylglyceryl transfer). Functionally, catalyzes the transfer of the diacylglyceryl group from phosphatidylglycerol to the sulfhydryl group of the N-terminal cysteine of a prolipoprotein, the first step in the formation of mature lipoproteins. This is Phosphatidylglycerol--prolipoprotein diacylglyceryl transferase from Polynucleobacter asymbioticus (strain DSM 18221 / CIP 109841 / QLW-P1DMWA-1) (Polynucleobacter necessarius subsp. asymbioticus).